We begin with the raw amino-acid sequence, 286 residues long: Putative 2-aminoethylphosphonate transport system permease protein PhnU (286 aa).

6 helical membrane-spanning segments follow: residues 19–39, 76–96, 111–131, 150–170, 202–222, and 254–274; these read WLLLPLLVLATLFFWPLSLIV, FFATAGCLLLGSVMSLILVFI, FIALPTFLITLAFTFIYGSAG, FLYSMQGVILAEITVFTPLVM, VIFPAALPALMAGGSLCLLLT, and YTVACMIALINIVLSLGLFSL. Residues 68 to 275 form the ABC transmembrane type-1 domain; it reads LLNTLQIAFF…VLSLGLFSLY (208 aa).

This sequence belongs to the binding-protein-dependent transport system permease family.

It localises to the cell inner membrane. Its function is as follows. Probably part of the PhnSTUV complex (TC 3.A.1.11.5) involved in 2-aminoethylphosphonate import. Probably responsible for the translocation of the substrate across the membrane. In Salmonella typhimurium (strain LT2 / SGSC1412 / ATCC 700720), this protein is Putative 2-aminoethylphosphonate transport system permease protein PhnU (phnU).